We begin with the raw amino-acid sequence, 55 residues long: Mitochondrial import receptor subunit TOM7 homolog (55 aa).

The Cytoplasmic portion of the chain corresponds to 1–20 (MVKLSKEAKQRLQQLFKGSQ). A helical transmembrane segment spans residues 21 to 36 (FAIRWGFIPLVIYLGF). Residues 37–55 (KRGADPGMPEPTVLSLLWG) lie on the Mitochondrial intermembrane side of the membrane.

Belongs to the Tom7 family. Forms part of the preprotein translocase complex of the outer mitochondrial membrane (TOM complex) which consists of at least 7 different proteins (TOMM5, TOMM6, TOMM7, TOMM20, TOMM22, TOMM40 and TOMM70).

It is found in the mitochondrion outer membrane. Its function is as follows. Required for assembly and stability of the TOM complex. Positive regulator of PRKN translocation to damaged mitochondria. Acts probably by stabilizing PINK1 on the outer membrane of depolarized mitochondria. The protein is Mitochondrial import receptor subunit TOM7 homolog (TOMM7) of Homo sapiens (Human).